Reading from the N-terminus, the 95-residue chain is Protein TusB (95 aa).

The protein belongs to the DsrH/TusB family. In terms of assembly, heterohexamer, formed by a dimer of trimers. The hexameric TusBCD complex contains 2 copies each of TusB, TusC and TusD. The TusBCD complex interacts with TusE.

Its subcellular location is the cytoplasm. Part of a sulfur-relay system required for 2-thiolation of 5-methylaminomethyl-2-thiouridine (mnm(5)s(2)U) at tRNA wobble positions. This Escherichia coli (strain ATCC 8739 / DSM 1576 / NBRC 3972 / NCIMB 8545 / WDCM 00012 / Crooks) protein is Protein TusB.